A 244-amino-acid polypeptide reads, in one-letter code: tRNA (guanine-N(7)-)-methyltransferase (244 aa).

Positions 75, 100, 127, and 150 each coordinate S-adenosyl-L-methionine. D150 is an active-site residue. Substrate contacts are provided by residues K154, D186, and 223–226 (TRFE).

This sequence belongs to the class I-like SAM-binding methyltransferase superfamily. TrmB family.

It catalyses the reaction guanosine(46) in tRNA + S-adenosyl-L-methionine = N(7)-methylguanosine(46) in tRNA + S-adenosyl-L-homocysteine. It participates in tRNA modification; N(7)-methylguanine-tRNA biosynthesis. Catalyzes the formation of N(7)-methylguanine at position 46 (m7G46) in tRNA. The sequence is that of tRNA (guanine-N(7)-)-methyltransferase from Xylella fastidiosa (strain M23).